The following is a 367-amino-acid chain: GTP cyclohydrolase FolE2 (367 aa).

The protein belongs to the GTP cyclohydrolase IV family.

It carries out the reaction GTP + H2O = 7,8-dihydroneopterin 3'-triphosphate + formate + H(+). It participates in cofactor biosynthesis; 7,8-dihydroneopterin triphosphate biosynthesis; 7,8-dihydroneopterin triphosphate from GTP: step 1/1. Converts GTP to 7,8-dihydroneopterin triphosphate. This is GTP cyclohydrolase FolE2 from Dinoroseobacter shibae (strain DSM 16493 / NCIMB 14021 / DFL 12).